The sequence spans 248 residues: 14-3-3 protein sigma (248 aa).

Phosphoserine occurs at positions 5, 74, and 248.

This sequence belongs to the 14-3-3 family. Homodimer. Interacts with KRT17 and SAMSN1. Found in a complex with XPO7, EIF4A1, ARHGAP1, VPS26A, VPS29 and VPS35. Interacts with GAB2. Interacts with SRPK2. Interacts with COPS6. Interacts with COP1; this interaction leads to proteasomal degradation. Interacts with the 'Thr-369' phosphorylated form of DAPK2. Interacts with PI4KB. Interacts with SLITRK1. Interacts with LRRK2; this interaction is dependent on LRRK2 phosphorylation. Interacts with PKP3 (via N-terminus); the interaction maintains the cytoplasmic pool of PKP3, facilitates PKP3 exchange at desmosomes and restricts PKP3 localization to existing desmosome cell junctions. Interacts with LCP2. Post-translationally, ubiquitinated. Ubiquitination by RFFL induces proteasomal degradation and indirectly regulates p53/TP53 activation. In terms of tissue distribution, expressed in dorsal skin (at protein level). Expressed in the basal layer of skin epithelium and in outer root sheath of hair follicle.

It localises to the cytoplasm. The protein localises to the nucleus. It is found in the secreted. Functionally, adapter protein implicated in the regulation of a large spectrum of both general and specialized signaling pathways. Binds to a large number of partners, usually by recognition of a phosphoserine or phosphothreonine motif. Binding generally results in the modulation of the activity of the binding partner. Promotes cytosolic retention of GBP1 GTPase by binding to phosphorylated GBP1, thereby inhibiting the innate immune response. Also acts as a TP53/p53-regulated inhibitor of G2/M progression. When bound to KRT17, regulates protein synthesis and epithelial cell growth by stimulating Akt/mTOR pathway. Acts to maintain desmosome cell junction adhesion in epithelial cells via interacting with and sequestering PKP3 to the cytoplasm, thereby restricting its translocation to existing desmosome structures and therefore maintaining desmosome protein homeostasis. Also acts to facilitate PKP3 exchange at desmosome plaques, thereby maintaining keratinocyte intercellular adhesion. May also regulate MDM2 autoubiquitination and degradation and thereby activate p53/TP53. The polypeptide is 14-3-3 protein sigma (Sfn) (Mus musculus (Mouse)).